The primary structure comprises 329 residues: Sex comb on midleg-like protein 1 (329 aa).

A phosphoserine mark is found at S138 and S238. In terms of domain architecture, SAM spans 258-325; the sequence is WSVEAVVLFL…YYIDRLKQGK (68 aa).

The protein belongs to the SCM family.

The protein resides in the nucleus. Its function is as follows. Putative Polycomb group (PcG) protein. PcG proteins act by forming multiprotein complexes, which are required to maintain the transcriptionally repressive state of homeotic genes throughout development. May be involved in spermatogenesis during sexual maturation. This is Sex comb on midleg-like protein 1 (SCML1) from Nomascus leucogenys (Northern white-cheeked gibbon).